The sequence spans 679 residues: Enzymatic polyprotein (679 aa).

The protease stretch occupies residues 40 to 130 (LHCFVDTGAS…LYEPFIQFTD (91 aa)). Asp45 is an active-site residue. The Reverse transcriptase domain occupies 272 to 452 (LKVIKPSKSP…KKINFLGLEI (181 aa)).

Belongs to the caulimoviridae enzymatic polyprotein family.

The enzyme catalyses DNA(n) + a 2'-deoxyribonucleoside 5'-triphosphate = DNA(n+1) + diphosphate. Its function is as follows. Encodes for at least two polypeptides: protease (PR) and reverse transcriptase (RT). The protease processes the polyprotein in cis. Reverse transcriptase is multifunctional enzyme that converts the viral RNA genome into dsDNA in viral cytoplasmic capsids. This enzyme displays a DNA polymerase activity that can copy either DNA or RNA templates, and a ribonuclease H (RNase H) activity that cleaves the RNA strand of RNA-DNA heteroduplexes in a partially processive 3'- to 5'-endonucleasic mode. Neo-synthesized pregenomic RNA (pgRNA) are encapsidated, and reverse-transcribed inside the nucleocapsid. Partial (+)DNA is synthesized from the (-)DNA template and generates the relaxed circular DNA (RC-DNA) genome. After budding and infection, the RC-DNA migrates in the nucleus, and is converted into a plasmid-like covalently closed circular DNA (cccDNA). The protein is Enzymatic polyprotein of Cauliflower mosaic virus (strain BBC) (CaMV).